The sequence spans 220 residues: Ubiquitin-like-conjugating enzyme ATG10 (220 aa).

The active-site Glycyl thioester intermediate is the Cys-166.

Belongs to the ATG10 family. As to quaternary structure, interacts with MAP1LC3A. By interacting with MAP1LC3A, it plays a role in the conjugation of ATG12 to ATG5. Also able to directly interact either with ATG5 or ATG7. Interacts with IRGM.

It localises to the cytoplasm. Its function is as follows. E2-like enzyme involved in autophagy. Acts as an E2-like enzyme that catalyzes the conjugation of ATG12 to ATG5. ATG12 conjugation to ATG5 is required for autophagy. Likely serves as an ATG5-recognition molecule. Not involved in ATG12 conjugation to ATG3. Plays a role in adenovirus-mediated cell lysis. The protein is Ubiquitin-like-conjugating enzyme ATG10 (ATG10) of Homo sapiens (Human).